A 378-amino-acid chain; its full sequence is N-acetyldiaminopimelate deacetylase (378 aa).

D72 is an active-site residue. The active-site Proton acceptor is E131.

Belongs to the peptidase M20A family. N-acetyldiaminopimelate deacetylase subfamily.

It catalyses the reaction N-acetyl-(2S,6S)-2,6-diaminopimelate + H2O = (2S,6S)-2,6-diaminopimelate + acetate. It functions in the pathway amino-acid biosynthesis; L-lysine biosynthesis via DAP pathway; LL-2,6-diaminopimelate from (S)-tetrahydrodipicolinate (acetylase route): step 3/3. Functionally, catalyzes the conversion of N-acetyl-diaminopimelate to diaminopimelate and acetate. This is N-acetyldiaminopimelate deacetylase from Enterococcus faecalis (strain ATCC 700802 / V583).